A 618-amino-acid polypeptide reads, in one-letter code: Manganese lipoxygenase (618 aa).

The first 16 residues, 1–16 (MRSRILAIVFAARHVA), serve as a signal peptide directing secretion. The span at 36–45 (SSTTVLPSPT) shows a compositional bias: low complexity. Positions 36–58 (SSTTVLPSPTQYTLPNNDPNQGA) are disordered. A compositionally biased stretch (polar residues) spans 46–58 (QYTLPNNDPNQGA). One can recognise a Lipoxygenase domain in the interval 47 to 617 (YTLPNNDPNQ…NPAVNPFFLS (571 aa)). Residues asparagine 60, asparagine 91, asparagine 106, asparagine 116, and asparagine 157 are each glycosylated (N-linked (GlcNAc...) asparagine). Mn(2+) contacts are provided by histidine 290, histidine 294, histidine 478, and asparagine 482. N-linked (GlcNAc...) asparagine glycosylation is present at asparagine 513. Valine 618 is a binding site for Mn(2+).

The protein belongs to the lipoxygenase family. It depends on Mn(2+) as a cofactor. In terms of processing, N- and O-glycosylated.

The protein resides in the secreted. The enzyme catalyses (9Z,12Z)-octadecadienoate + O2 = (11S)-hydroperoxy-(9Z,12Z)-octadecadienoate. It carries out the reaction (9Z,12Z)-octadecadienoate + O2 = (13R)-hydroperoxy-(9Z,11E)-octadecadienoate. The catalysed reaction is (9Z,12Z,15Z)-octadecatrienoate + O2 = (11S)-hydroperoxy-(9Z,12Z,15Z)-octadecatrienoate. It catalyses the reaction (9Z,12Z,15Z)-octadecatrienoate + O2 = (13R)-hydroperoxy-(9Z,11E,15Z)-octadecatrienoate. In terms of biological role, lipoxygenase that metabolizes linoleic and alpha-linolenic acids to 11S- and 13R-hydroperoxy fatty acids. At the end of lipoxygenation, the intermediate product 11S-HPODE from linoleic acid is then transformed into 13R-HPODE as the final product. It also acts on alpha-linolenic acid producing 11S-HPOTrE and 13R-HPOTrE with subsequent transformation of 11S-HPOTrE to 13R-HPOTrE as the final product. Gamma-linolenic acid is a poor substrate. Oleate and arachidonate are not substrates. The protein is Manganese lipoxygenase of Gaeumannomyces tritici (Wheat and barley take-all root rot fungus).